The sequence spans 283 residues: Elongation factor Ts (283 aa).

Residues 80 to 83 (TDFV) form an involved in Mg(2+) ion dislocation from EF-Tu region.

This sequence belongs to the EF-Ts family.

The protein resides in the cytoplasm. In terms of biological role, associates with the EF-Tu.GDP complex and induces the exchange of GDP to GTP. It remains bound to the aminoacyl-tRNA.EF-Tu.GTP complex up to the GTP hydrolysis stage on the ribosome. The polypeptide is Elongation factor Ts (Actinobacillus pleuropneumoniae serotype 5b (strain L20)).